Here is a 275-residue protein sequence, read N- to C-terminus: 2,3,4,5-tetrahydropyridine-2,6-dicarboxylate N-succinyltransferase (275 aa).

Substrate contacts are provided by arginine 106 and aspartate 143.

The protein belongs to the transferase hexapeptide repeat family. In terms of assembly, homotrimer.

The protein resides in the cytoplasm. It catalyses the reaction (S)-2,3,4,5-tetrahydrodipicolinate + succinyl-CoA + H2O = (S)-2-succinylamino-6-oxoheptanedioate + CoA. The protein operates within amino-acid biosynthesis; L-lysine biosynthesis via DAP pathway; LL-2,6-diaminopimelate from (S)-tetrahydrodipicolinate (succinylase route): step 1/3. This Burkholderia ambifaria (strain ATCC BAA-244 / DSM 16087 / CCUG 44356 / LMG 19182 / AMMD) (Burkholderia cepacia (strain AMMD)) protein is 2,3,4,5-tetrahydropyridine-2,6-dicarboxylate N-succinyltransferase.